The chain runs to 530 residues: Na(+)/H(+) antiporter NhaB (530 aa).

12 consecutive transmembrane segments (helical) span residues 13–33 (FLGKAPDWYKIAILSFLVINP), 34–54 (LVFFFVDPFTAGWLLVVEFIF), 90–110 (LVANIEVLLLLVFMVAGIYFM), 121–141 (ILIGIKSKTALSVAFCFTAAF), 145–165 (FLDALTVIAVVISVAVGFYAI), 205–225 (LLMHAGVGTALGGVMTMVGEP), 241–261 (FIIRMLPITAPVFICGILTCI), 306–326 (GLIAVWLIVGLALHLAAVGLI), 351–371 (EEALPFTALLAVFFAVVAVII), 393–413 (LALFYVANGLLSMVSDNVFVG), 455–475 (GQAAFLFLLTSALAPLIQLSY), and 481–501 (MALPYTIVLALVGMFGIIFFL).

This sequence belongs to the NhaB Na(+)/H(+) (TC 2.A.34) antiporter family.

The protein localises to the cell inner membrane. It catalyses the reaction 2 Na(+)(in) + 3 H(+)(out) = 2 Na(+)(out) + 3 H(+)(in). In terms of biological role, na(+)/H(+) antiporter that extrudes sodium in exchange for external protons. The polypeptide is Na(+)/H(+) antiporter NhaB (Aliivibrio fischeri (strain ATCC 700601 / ES114) (Vibrio fischeri)).